The chain runs to 324 residues: o-succinylbenzoate synthase (324 aa).

Lys-135 (proton donor) is an active-site residue. Mg(2+) is bound by residues Asp-163, Glu-192, and Asp-215. The Proton acceptor role is filled by Lys-237.

Belongs to the mandelate racemase/muconate lactonizing enzyme family. MenC type 1 subfamily. Requires a divalent metal cation as cofactor.

It catalyses the reaction (1R,6R)-6-hydroxy-2-succinyl-cyclohexa-2,4-diene-1-carboxylate = 2-succinylbenzoate + H2O. It participates in quinol/quinone metabolism; 1,4-dihydroxy-2-naphthoate biosynthesis; 1,4-dihydroxy-2-naphthoate from chorismate: step 4/7. The protein operates within quinol/quinone metabolism; menaquinone biosynthesis. Its function is as follows. Converts 2-succinyl-6-hydroxy-2,4-cyclohexadiene-1-carboxylate (SHCHC) to 2-succinylbenzoate (OSB). In Aliivibrio salmonicida (strain LFI1238) (Vibrio salmonicida (strain LFI1238)), this protein is o-succinylbenzoate synthase.